We begin with the raw amino-acid sequence, 569 residues long: Peptide transporter PTR_C (569 aa).

Basic and acidic residues predominate over residues 1 to 25 (MSQNVDEKVVHDDASVIRSVDRSES). The disordered stretch occupies residues 1–43 (MSQNVDEKVVHDDASVIRSVDRSESDSYPDSVSPEGAEPSEEE). The helical transmembrane segment at 54–74 (VPLACWLVAIVELAERFSYYG) threads the bilayer. N-linked (GlcNAc...) asparagine glycosylation is present at Asn-98. 3 consecutive transmembrane segments (helical) span residues 104–124 (ALSY…AWVA), 134–154 (ISIF…TSLP), and 159–179 (NTSL…TGGV). Asn-212 carries N-linked (GlcNAc...) asparagine glycosylation. Helical transmembrane passes span 215–235 (IQNV…SVIA), 245–265 (FWAA…ALFL), 322–342 (ALYA…YGQM), 366–386 (IDSI…YPFI), 398–418 (IFWG…LQHF), 444–464 (VALQ…ASIT), 479–499 (SFIM…GIAL), and 510–530 (WTYT…WFLF).

This sequence belongs to the major facilitator superfamily. Proton-dependent oligopeptide transporter (POT/PTR) (TC 2.A.17) family.

The protein resides in the cell membrane. The enzyme catalyses a dipeptide(out) + H(+)(out) = a dipeptide(in) + H(+)(in). It carries out the reaction an L-amino acid tripeptide(out) + H(+)(out) = an L-amino acid tripeptide(in) + H(+)(in). Its function is as follows. Peptide transporter that exploits the inwardly directed proton motive force to facilitate the cellular uptake of di/tripeptides. Shows strong uptake specificity towards the dipeptides Tyr-Phe and Leu-Gly and the tripeptide Phe-Gly-Gly, when compared to PTR_A and PTR_B. Also able to import peptide-based antifungals such as the peptide-nucleoside drug nikkomycin Z as well as the glucosamine-6-phosphate synthase inhibitor, L-norvalyl-N3-(4-methoxyfumaroyl)-L-2,3-diaminopropionoic acid (Nva-FMDP). The protein is Peptide transporter PTR_C of Candidozyma auris (Yeast).